The following is a 402-amino-acid chain: Caspase-1 (402 aa).

The region spanning 1–91 is the CARD domain; sequence MADKILRAKR…YLAGILELQS (91 aa). Positions 1–118 are excised as a propeptide; the sequence is MADKILRAKR…PSSSETKEEQ (118 aa). Positions 98-125 are disordered; sequence FVATEDSKGGHPSSSETKEEQNKEDGTF. A compositionally biased stretch (basic and acidic residues) spans 113–123; that stretch reads ETKEEQNKEDG. Active-site residues include H236 and C284. Residues 297-314 constitute a propeptide that is removed on maturation; sequence SVRDSEEDFLTDAIFEDD. S301 is subject to Phosphoserine. Residue R343 is modified to Omega-N-methylarginine.

The protein belongs to the peptidase C14A family. Heterotetramer that consists of two anti-parallel arranged heterodimers, each one formed by a 20 kDa (Caspase-1 subunit p20) and a 10 kDa (Caspase-1 subunit p10) subunit. May be a component of the inflammasome, a protein complex which also includes PYCARD, CARD8 and NLRP2 and whose function would be the activation of pro-inflammatory caspases. Component of the AIM2 PANoptosome complex, a multiprotein complex that drives inflammatory cell death (PANoptosis). Both the p10 and p20 subunits interact with MEFV. Interacts with CARD17P/INCA and CARD18. Interacts with SERPINB1; this interaction regulates CASP1 activity. As to quaternary structure, heterotetramer that consists of two anti-parallel arranged heterodimers, each one formed by a 20 kDa (Caspase-1 subunit p20) and a 10 kDa (Caspase-1 subunit p10) subunit. The two subunits are derived from the precursor sequence by an autocatalytic mechanism. Post-translationally, ubiquitinated via 'Lys-11'-linked polyubiquitination. Deubiquitinated by USP8. As to expression, high level expression seen in spleen and lung, low level expression seen in brain, heart, liver, kidney, testis and skeletal muscle.

It localises to the cytoplasm. The protein resides in the cell membrane. It carries out the reaction Strict requirement for an Asp residue at position P1 and has a preferred cleavage sequence of Tyr-Val-Ala-Asp-|-.. In terms of biological role, thiol protease involved in a variety of inflammatory processes by proteolytically cleaving other proteins, such as the precursors of the inflammatory cytokines interleukin-1 beta (IL1B) and interleukin 18 (IL18) as well as the pyroptosis inducer Gasdermin-D (GSDMD), into active mature peptides. Plays a key role in cell immunity as an inflammatory response initiator: once activated through formation of an inflammasome complex, it initiates a pro-inflammatory response through the cleavage of the two inflammatory cytokines IL1B and IL18, releasing the mature cytokines which are involved in a variety of inflammatory processes. Cleaves a tetrapeptide after an Asp residue at position P1. Also initiates pyroptosis, a programmed lytic cell death pathway, through cleavage of GSDMD. In contrast to cleavage of interleukin IL1B, recognition and cleavage of GSDMD is not strictly dependent on the consensus cleavage site but depends on an exosite interface on CASP1 that recognizes and binds the Gasdermin-D, C-terminal (GSDMD-CT) part. Cleaves and activates CASP7 in response to bacterial infection, promoting plasma membrane repair. Upon inflammasome activation, during DNA virus infection but not RNA virus challenge, controls antiviral immunity through the cleavage of CGAS, rendering it inactive. In apoptotic cells, cleaves SPHK2 which is released from cells and remains enzymatically active extracellularly. The polypeptide is Caspase-1 (Casp1) (Mus musculus (Mouse)).